A 265-amino-acid polypeptide reads, in one-letter code: Mlc titration factor A (265 aa).

4 residues coordinate Zn(2+): histidine 111, histidine 148, histidine 152, and glutamate 211.

Belongs to the MtfA family. As to quaternary structure, interacts with Mlc. It depends on Zn(2+) as a cofactor.

The protein localises to the cytoplasm. Its function is as follows. Involved in the modulation of the activity of the glucose-phosphotransferase system (glucose-PTS). Interacts with the transcriptional repressor Mlc, preventing its interaction with DNA and leading to the modulation of expression of genes regulated by Mlc, including ptsG, which encodes the PTS system glucose-specific EIICB component. In terms of biological role, shows zinc-dependent metallopeptidase activity. This Escherichia fergusonii (strain ATCC 35469 / DSM 13698 / CCUG 18766 / IAM 14443 / JCM 21226 / LMG 7866 / NBRC 102419 / NCTC 12128 / CDC 0568-73) protein is Mlc titration factor A.